Consider the following 263-residue polypeptide: 3-methyl-2-oxobutanoate hydroxymethyltransferase (263 aa).

Residues D45 and D84 each contribute to the Mg(2+) site. 3-methyl-2-oxobutanoate contacts are provided by residues 45 to 46 (DS), D84, and K112. A Mg(2+)-binding site is contributed by E114. E180 acts as the Proton acceptor in catalysis.

Belongs to the PanB family. In terms of assembly, homodecamer; pentamer of dimers. Mg(2+) is required as a cofactor.

Its subcellular location is the cytoplasm. It catalyses the reaction 3-methyl-2-oxobutanoate + (6R)-5,10-methylene-5,6,7,8-tetrahydrofolate + H2O = 2-dehydropantoate + (6S)-5,6,7,8-tetrahydrofolate. Its pathway is cofactor biosynthesis; (R)-pantothenate biosynthesis; (R)-pantoate from 3-methyl-2-oxobutanoate: step 1/2. In terms of biological role, catalyzes the reversible reaction in which hydroxymethyl group from 5,10-methylenetetrahydrofolate is transferred onto alpha-ketoisovalerate to form ketopantoate. This is 3-methyl-2-oxobutanoate hydroxymethyltransferase from Salmonella enteritidis PT4 (strain P125109).